Consider the following 354-residue polypeptide: MSIEVRGLSKRFGAFRALDEVSLHIETGELVALLGPSGCGKTTLLRIIAGLESADAGSVLFAGEDATDVDVRQRQVGFVFQHYALFKHMTVFENVAFGLRVRHRSQRPSEARIRAKVLDLLGLVQLDWLADRYPAQLSGGQRQRIALARALAVEPRVLLLDEPFGALDAKVRKELRRWLRRLHDELHVASVFVTHDQEEALEVADRVVLMNAGRIEQVGSPREVWERPATPFVYGFLGDVNQLHGHATRGVWRLGEVALPAPDLPEADNQRAIAYVRPHDIDLARAGTAAPGIPVRLNHVYLAGPSAYLELARQDDQAIIEAQVPEPLFRSLGLKEGEALLAQPRRARVFAVQP.

An ABC transporter domain is found at 3-237 (IEVRGLSKRF…PATPFVYGFL (235 aa)). ATP is bound at residue 35-42 (GPSGCGKT).

It belongs to the ABC transporter superfamily. Sulfate/tungstate importer (TC 3.A.1.6) family. In terms of assembly, the complex is composed of two ATP-binding proteins (CysA), two transmembrane proteins (CysT and CysW) and a solute-binding protein (CysP).

It localises to the cell inner membrane. The enzyme catalyses sulfate(out) + ATP + H2O = sulfate(in) + ADP + phosphate + H(+). The catalysed reaction is thiosulfate(out) + ATP + H2O = thiosulfate(in) + ADP + phosphate + H(+). Part of the ABC transporter complex CysAWTP involved in sulfate/thiosulfate import. Responsible for energy coupling to the transport system. The polypeptide is Sulfate/thiosulfate import ATP-binding protein CysA (Bordetella bronchiseptica (strain ATCC BAA-588 / NCTC 13252 / RB50) (Alcaligenes bronchisepticus)).